Reading from the N-terminus, the 442-residue chain is Adenylosuccinate synthetase (442 aa).

GTP-binding positions include 16 to 22 (GDEGKGK) and 44 to 46 (GHT). Asp17 functions as the Proton acceptor in the catalytic mechanism. Residues Asp17 and Gly44 each contribute to the Mg(2+) site. Residues 17–20 (DEGK), 42–45 (NAGH), Thr133, Arg147, Gln228, Thr243, and Arg307 contribute to the IMP site. His45 functions as the Proton donor in the catalytic mechanism. 303 to 309 (AVTGRPR) is a substrate binding site. GTP contacts are provided by residues Arg309, 335–337 (KLD), and 417–419 (STG).

Belongs to the adenylosuccinate synthetase family. In terms of assembly, homodimer. Requires Mg(2+) as cofactor.

It localises to the cytoplasm. It catalyses the reaction IMP + L-aspartate + GTP = N(6)-(1,2-dicarboxyethyl)-AMP + GDP + phosphate + 2 H(+). Its pathway is purine metabolism; AMP biosynthesis via de novo pathway; AMP from IMP: step 1/2. Functionally, plays an important role in the de novo pathway of purine nucleotide biosynthesis. Catalyzes the first committed step in the biosynthesis of AMP from IMP. The chain is Adenylosuccinate synthetase from Koribacter versatilis (strain Ellin345).